A 698-amino-acid polypeptide reads, in one-letter code: Auxin response factor 22 (698 aa).

Positions 128–230 (FAKTLTQSDA…ELCVGIRRAK (103 aa)) form a DNA-binding region, TF-B3. Residues 549–577 (TSSGSTETLSPGVTGNSSPNGNAHKTGNA) show a composition bias toward polar residues. The tract at residues 549-579 (TSSGSTETLSPGVTGNSSPNGNAHKTGNASD) is disordered. The PB1 domain maps to 603-683 (AGHCKVFMES…RRLTIIAGDR (81 aa)).

It belongs to the ARF family. Homodimers and heterodimers. As to expression, expressed in roots, culms, leaves and young panicles.

The protein localises to the nucleus. Its function is as follows. Auxin response factors (ARFs) are transcriptional factors that bind specifically to the DNA sequence 5'-TGTCTC-3' found in the auxin-responsive promoter elements (AuxREs). The polypeptide is Auxin response factor 22 (ARF22) (Oryza sativa subsp. japonica (Rice)).